Reading from the N-terminus, the 549-residue chain is Movement protein Hsp70h (549 aa).

It belongs to the heat shock protein 70 family.

It is found in the virion. Functionally, transports viral genome to neighboring plant cells directly through plasmosdesmata, without any budding. The movement protein allows efficient cell to cell propagation, by bypassing the host cell wall barrier. Two movement proteins, p6, Hsp70h and three structural proteins, CP, CPm, and P64 are essential for cell-cell movement. Also plays a role in virion formation. Together with CPm and p64, encapsidates the 5'-terminal portion of the viral genome. This Vitis vinifera (Grape) protein is Movement protein Hsp70h.